The primary structure comprises 757 residues: Alcohol dehydrogenase (quinone), dehydrogenase subunit (757 aa).

A signal peptide spans 1–34 (MTSGLLTPIKVTKKRLLSCAAALAFSAAVPVAFA). Glutamine 35 bears the Pyrrolidone carboxylic acid mark. Glutamate 95 is a binding site for pyrroloquinoline quinone. Residues cysteine 141 and cysteine 142 are joined by a disulfide bond. Residue arginine 147 coordinates pyrroloquinoline quinone. Residue glutamate 215 participates in Ca(2+) binding. Pyrroloquinoline quinone is bound at residue threonine 277. Residues asparagine 297 and aspartate 342 each coordinate Ca(2+). Aspartate 342 acts as the Proton acceptor in catalysis. 2 residues coordinate pyrroloquinoline quinone: lysine 369 and isoleucine 588. The region spanning 640–719 (ARQKDGYFMY…DIRNFIVKRA (80 aa)) is the Cytochrome c domain. Residues cysteine 653, cysteine 656, histidine 657, and methionine 696 each contribute to the heme c site. Positions 726–757 (EVKARENSTGVPNDQFLNVPQSTADVPTADHP) are disordered. Polar residues predominate over residues 732–750 (NSTGVPNDQFLNVPQSTAD).

The protein belongs to the bacterial PQQ dehydrogenase family. The alcohol dehydrogenase multicomponent enzyme system is composed of a dehydrogenase subunit I (AdhA), a cytochrome c subunit II (AdhB) and a subunit III (AdhS). The cofactor is pyrroloquinoline quinone. Ca(2+) is required as a cofactor. Heme c serves as cofactor.

The protein resides in the cell membrane. It carries out the reaction ethanol + a ubiquinone = a ubiquinol + acetaldehyde. Its activity is regulated as follows. 2,6-dichloro-4-dicyanovinylphenol (PC16) and antimycin A inhibit ubiquinol oxidation activity more selectively than the ubiquinone reductase activity. Its function is as follows. Dehydrogenase component of the alcohol dehydrogenase multicomponent enzyme system which is involved in the production of acetic acid and in the ethanol oxidase respiratory chain. Quinohemoprotein alcohol dehydrogenase (ADH) catalyzes the oxidation of ethanol to acetaldehyde by transferring electrons to the ubiquinone embedded in the membrane phospholipids. The electrons transfer from ethanol to membranous ubiquinone occurs from pyrroloquinoline quinone (PQQ) to one heme c in subunit I (AdhA), and finally to two heme c in subunit II (AdhB). Besides ubiquinone reduction, ADH also has a ubiquinol (QH2) oxidation reaction which mediates electron transfer from ubiquinol to the non-energy generating bypass oxidase system. The electrons transfer occurs from ubiquinol (QH2) to the additional heme c within subunit II (AdhB). Also able to use quinone analogs such as 2,3-dimethoxy-5-methyl-6-n-decyl-1,4-benzoquinone (DB) and 2,3-dimethoxy-5-methyl-6-n-pentyl-1,4-benzoquinone (PB). The chain is Alcohol dehydrogenase (quinone), dehydrogenase subunit from Gluconobacter oxydans (strain 621H) (Gluconobacter suboxydans).